We begin with the raw amino-acid sequence, 117 residues long: PBP1-interacting protein XAC1 (117 aa).

Positions 1–60 (MSKAPSQPAKKWMSARTLAKSEDATNRKSNTAAPASQPSQQPASVMHERPTPPPPAPVQL) are disordered. Positions 32-44 (AAPASQPSQQPAS) are enriched in low complexity.

As to quaternary structure, forms a complex composed of at least MKT1, PBP1, XAC1 and LSM12. Forms a complex composed of at least MKT1L, PBP1, XAC1 and LSM12.

The protein resides in the cytoplasm. In terms of biological role, involved in post-transcriptional regulation of gene expression. In Trypanosoma brucei brucei (strain 927/4 GUTat10.1), this protein is PBP1-interacting protein XAC1.